A 134-amino-acid chain; its full sequence is MHHQKQQQQQKQQGEAPCRHLQWRLSGVVLCVLVVASLVSTAASSPLDPHHLAKRSFFDIQCKGVYDKSIFARLDRICEDCYNLFREPQLHSLCRKDCFTSDYFKGCIDVLLLQDDMDKIQSWIKQIHGAEPGV.

3 cysteine pairs are disulfide-bonded: cysteine 62-cysteine 98, cysteine 78-cysteine 94, and cysteine 81-cysteine 107.

Belongs to the arthropod CHH/MIH/GIH/VIH hormone family.

Its subcellular location is the secreted. The polypeptide is Ion transport peptide-like (Schistocerca gregaria (Desert locust)).